The primary structure comprises 576 residues: MNKLYIGNLNESVTPADLEKVFNDHKISFSGQFLVKSGYAFVDCPDEQWAMKAIETFSGKVELHGKQLEIEHSVPKKQRSRKIQIRNIPPQLRWEVLDGLLAQYGTVENCEQVNTDSETAVVNVTYTNREQTRQAIMKLNGHQLENHVLKVSYIPDEQSVQGPENGRRGGFGARGAPRQGSPVTAGAPVKQQPVDIPLRLLVPTQYVGAIIGKEGATIRNITKQTQSKIDVHRKENAGAAEKAISIHSTPEGCSAACKMILEIMQKEAKDTKTADEVPLKILAHNNFVGRLIGKEGRNLKKVEQDTETKITISSLQDLTLYNPERTITVKGSIENCCKAEQEIMKKVREAYENDVAAMSLQSHLIPGLNLAAVGLFPASSNAVPPPPSSVSGAAPYSSFMPPEQETVHVFIPAQAVGAIIGKKGQHIKQLSRFASASIKIAPPETPDSKVRMVVITGPPEAQFKAQGRIYGKLKEENFFGPKEEVKLETHIRVPASAAGRVIGKGGKTVNELQNLTAAEVVVPRDQTPDENEQVIVKIIGHFYASQMAQRKIRDILAQVKQQHQKGQSGQLQARRK.

2 RRM domains span residues 2–75 (NKLY…HSVP) and 81–156 (RKIQ…YIPD). Residues 158–189 (QSVQGPENGRRGGFGARGAPRQGSPVTAGAPV) form a disordered region. 2 KH domains span residues 195-260 (DIPL…CKMI) and 276-343 (EVPL…EQEI). Tyr396 carries the post-translational modification Phosphotyrosine; by SRC. 2 KH domains span residues 404–469 (QETV…QGRI) and 486–552 (KLET…QRKI).

This sequence belongs to the RRM IMP/VICKZ family. As to quaternary structure, can form homooligomers and heterooligomers with IGF2BP1 and IGF2BP3 in an RNA-dependent manner. Associates with the cytoskeleton, predominantly with actin filament bundles and occasionally with microtubules. In a heterologous system, interacts with ELAVL1, DHX9 and HNRNPU. Post-translationally, phosphorylated by SRC at Tyr-396. This residue is involved in ACTB mRNA binding, its phosphorylation impairs association with ACTB mRNA and hence abolishes translational repression. Phosphorylation occurs in close proximity to filopodia and in the growth cones of differentiated neuroglioblastoma cells. As to expression, expressed in neurons and embryonic fibroblasts (at protein level).

It localises to the nucleus. Its subcellular location is the cytoplasm. The protein localises to the perinuclear region. It is found in the P-body. The protein resides in the stress granule. It localises to the cell projection. Its subcellular location is the growth cone. The protein localises to the filopodium. It is found in the lamellipodium. Its function is as follows. RNA-binding factor that recruits target transcripts to cytoplasmic protein-RNA complexes (mRNPs). This transcript 'caging' into mRNPs allows mRNA transport and transient storage. It also modulates the rate and location at which target transcripts encounter the translational apparatus and shields them from endonuclease attacks or microRNA-mediated degradation. Preferentially binds to N6-methyladenosine (m6A)-containing mRNAs and increases their stability. Plays a direct role in the transport and translation of transcripts required for axonal regeneration in adult sensory neurons. Regulates localized beta-actin/ACTB mRNA translation in polarized cells, a crucial process for cell migration and neurite outgrowth. Co-transcriptionally associates with the ACTB mRNA in the nucleus. This binding involves by a conserved 54-nucleotide element in the ACTB mRNA 3'-UTR, known as the 'zipcode'. The ribonucleoparticle (RNP) thus formed is exported to the cytoplasm, binds to a motor protein and is transported along the cytoskeleton to the cell periphery. During transport, IGF2BP1 prevents beta-actin mRNA from being translated into protein. When the RNP complex reaches its destination near the plasma membrane, IGF2BP1 is phosphorylated by SRC. This releases the mRNA, allowing ribosomal 40S and 60S subunits to assemble and initiate ACTB protein synthesis. The monomeric ACTB protein then assembles into the subcortical actin cytoskeleton, which pushes the leading edge onwards. Binds MYC mRNA. Binding to MYC mRNA is enhanced by m6A-modification of the CRD. Promotes the directed movement of cells by fine-tuning intracellular signaling networks. Binds to MAPK4 3'-UTR and inhibits its translation. Interacts with PTEN transcript open reading frame (ORF) and prevents mRNA decay. This combined action on MAPK4 (down-regulation) and PTEN (up-regulation) antagonizes HSPB1 phosphorylation, consequently it prevents G-actin sequestration by phosphorylated HSPB1, allowing F-actin polymerization. Hence enhances the velocity of cell migration and stimulates directed cell migration by PTEN-modulated polarization. The chain is Insulin-like growth factor 2 mRNA-binding protein 1 (IGF2BP1) from Gallus gallus (Chicken).